A 227-amino-acid polypeptide reads, in one-letter code: tRNA (guanine-N(1)-)-methyltransferase (227 aa).

S-adenosyl-L-methionine-binding positions include Gly107 and 127 to 132; that span reads LGDFIL.

Belongs to the RNA methyltransferase TrmD family. Homodimer.

The protein localises to the cytoplasm. It carries out the reaction guanosine(37) in tRNA + S-adenosyl-L-methionine = N(1)-methylguanosine(37) in tRNA + S-adenosyl-L-homocysteine + H(+). Its function is as follows. Specifically methylates guanosine-37 in various tRNAs. This is tRNA (guanine-N(1)-)-methyltransferase from Mesomycoplasma hyopneumoniae (strain 7448) (Mycoplasma hyopneumoniae).